Consider the following 187-residue polypeptide: Acireductone dioxygenase 4 (187 aa).

Residue Ala-2 is modified to N-acetylalanine. The Fe(2+) site is built by His-89, His-91, Glu-95, and His-134. Residues His-89, His-91, Glu-95, and His-134 each contribute to the Ni(2+) site.

This sequence belongs to the acireductone dioxygenase (ARD) family. Fe(2+) is required as a cofactor. The cofactor is Ni(2+).

It is found in the cytoplasm. The protein localises to the nucleus. It catalyses the reaction 1,2-dihydroxy-5-(methylsulfanyl)pent-1-en-3-one + O2 = 4-methylsulfanyl-2-oxobutanoate + formate + 2 H(+). The enzyme catalyses 1,2-dihydroxy-5-(methylsulfanyl)pent-1-en-3-one + O2 = 3-(methylsulfanyl)propanoate + CO + formate + 2 H(+). It participates in amino-acid biosynthesis; L-methionine biosynthesis via salvage pathway; L-methionine from S-methyl-5-thio-alpha-D-ribose 1-phosphate: step 5/6. Catalyzes 2 different reactions between oxygen and the acireductone 1,2-dihydroxy-3-keto-5-methylthiopentene (DHK-MTPene) depending upon the metal bound in the active site. Fe-containing acireductone dioxygenase (Fe-ARD) produces formate and 2-keto-4-methylthiobutyrate (KMTB), the alpha-ketoacid precursor of methionine in the methionine recycle pathway. Ni-containing acireductone dioxygenase (Ni-ARD) produces methylthiopropionate, carbon monoxide and formate, and does not lie on the methionine recycle pathway. The sequence is that of Acireductone dioxygenase 4 (ARD4) from Arabidopsis thaliana (Mouse-ear cress).